The following is a 61-amino-acid chain: MLKYAIIFAIISLIAGALGFSGVAAGAAGIAKILFFLFLVVAVIFIVLAVLGVGAARSVMK.

2 consecutive transmembrane segments (helical) span residues 5–25 (AIIF…GVAA) and 33–53 (ILFF…VLGV).

This sequence belongs to the UPF0391 family.

The protein resides in the cell membrane. The protein is UPF0391 membrane protein Aave_0978 of Paracidovorax citrulli (strain AAC00-1) (Acidovorax citrulli).